Consider the following 194-residue polypeptide: Thymidine kinase (194 aa).

Residues 15 to 22 (GSMFSGKS) and 88 to 91 (DEVQ) each bind ATP. The Proton acceptor role is filled by E89. The Zn(2+) site is built by C145, C148, C183, and C186.

This sequence belongs to the thymidine kinase family. In terms of assembly, homotetramer.

The protein resides in the cytoplasm. It catalyses the reaction thymidine + ATP = dTMP + ADP + H(+). This chain is Thymidine kinase, found in Bacillus cereus (strain AH820).